The following is a 396-amino-acid chain: Phosphoglycerate kinase (396 aa).

Residues D21–N23, R37, H60–R63, R121, and R154 each bind substrate. Residues K205, G296, E327, and G353 to S356 each bind ATP.

This sequence belongs to the phosphoglycerate kinase family. Monomer.

The protein localises to the cytoplasm. The catalysed reaction is (2R)-3-phosphoglycerate + ATP = (2R)-3-phospho-glyceroyl phosphate + ADP. It functions in the pathway carbohydrate degradation; glycolysis; pyruvate from D-glyceraldehyde 3-phosphate: step 2/5. This Anaeromyxobacter sp. (strain Fw109-5) protein is Phosphoglycerate kinase.